Here is a 335-residue protein sequence, read N- to C-terminus: Ketol-acid reductoisomerase (NADP(+)) (335 aa).

A KARI N-terminal Rossmann domain is found at alanine 2–threonine 182. Residues tyrosine 25–glutamine 28, arginine 48, serine 51, serine 53, and aspartate 83–glutamine 86 contribute to the NADP(+) site. Histidine 108 is a catalytic residue. An NADP(+)-binding site is contributed by glycine 134. The 146-residue stretch at threonine 183–leucine 328 folds into the KARI C-terminal knotted domain. Mg(2+) is bound by residues aspartate 191, glutamate 195, glutamate 227, and glutamate 231. Serine 252 serves as a coordination point for substrate.

The protein belongs to the ketol-acid reductoisomerase family. Requires Mg(2+) as cofactor.

It carries out the reaction (2R)-2,3-dihydroxy-3-methylbutanoate + NADP(+) = (2S)-2-acetolactate + NADPH + H(+). It catalyses the reaction (2R,3R)-2,3-dihydroxy-3-methylpentanoate + NADP(+) = (S)-2-ethyl-2-hydroxy-3-oxobutanoate + NADPH + H(+). It functions in the pathway amino-acid biosynthesis; L-isoleucine biosynthesis; L-isoleucine from 2-oxobutanoate: step 2/4. Its pathway is amino-acid biosynthesis; L-valine biosynthesis; L-valine from pyruvate: step 2/4. Functionally, involved in the biosynthesis of branched-chain amino acids (BCAA). Catalyzes an alkyl-migration followed by a ketol-acid reduction of (S)-2-acetolactate (S2AL) to yield (R)-2,3-dihydroxy-isovalerate. In the isomerase reaction, S2AL is rearranged via a Mg-dependent methyl migration to produce 3-hydroxy-3-methyl-2-ketobutyrate (HMKB). In the reductase reaction, this 2-ketoacid undergoes a metal-dependent reduction by NADPH to yield (R)-2,3-dihydroxy-isovalerate. The chain is Ketol-acid reductoisomerase (NADP(+)) from Methanosarcina barkeri (strain Fusaro / DSM 804).